The sequence spans 134 residues: Transmembrane protein 100 (134 aa).

S15 bears the Phosphoserine mark. Transmembrane regions (helical) follow at residues 56 to 76 and 84 to 104; these read CVIP…AVAY and IISI…ASSA. The residue at position 121 (S121) is a Phosphoserine.

Interacts (via C-terminus) with TRPA1 and TRPV1. Interacts with TASOR.

The protein localises to the cell membrane. The protein resides in the membrane. It localises to the perikaryon. It is found in the cytoplasm. Its subcellular location is the perinuclear region. The protein localises to the endoplasmic reticulum. Plays a role during embryonic arterial endothelium differentiation and vascular morphogenesis through the ACVRL1 receptor-dependent signaling pathway upon stimulation by bone morphogenetic proteins, such as GDF2/BMP9 and BMP10. Involved in the regulation of nociception, acting as a modulator of the interaction between TRPA1 and TRPV1, two molecular sensors and mediators of pain signals in dorsal root ganglia (DRG) neurons. Mechanistically, it weakens their interaction, thereby releasing the inhibition of TRPA1 by TRPV1 and increasing the single-channel open probability of the TRPA1-TRPV1 complex. The protein is Transmembrane protein 100 (TMEM100) of Bos taurus (Bovine).